We begin with the raw amino-acid sequence, 291 residues long: Protease HtpX (291 aa).

2 helical membrane passes run 4–24 (VLLFLATNLAVMLVLSIVLSV) and 37–57 (GGLLLMAAVFGFGGSIISLLM). Residue His143 participates in Zn(2+) binding. Residue Glu144 is part of the active site. A Zn(2+)-binding site is contributed by His147. A run of 2 helical transmembrane segments spans residues 158–178 (LIQGVVNTFVIYISRVLAGIV) and 198–218 (FAISMVFELIFGILASTIVMW). Residue Glu224 participates in Zn(2+) binding.

The protein belongs to the peptidase M48B family. The cofactor is Zn(2+).

The protein resides in the cell inner membrane. The chain is Protease HtpX from Tolumonas auensis (strain DSM 9187 / NBRC 110442 / TA 4).